The sequence spans 403 residues: Argininosuccinate synthase (403 aa).

10–18 is a binding site for ATP; that stretch reads AYSGGVDTS. Position 89 (Tyr-89) interacts with L-citrulline. Gly-119 is an ATP binding site. L-aspartate-binding residues include Thr-121, Asn-125, and Asp-126. Residue Asn-125 participates in L-citrulline binding. Arg-129, Ser-177, Ser-186, Glu-262, and Tyr-274 together coordinate L-citrulline.

It belongs to the argininosuccinate synthase family. Type 1 subfamily. Homotetramer.

The protein resides in the cytoplasm. It catalyses the reaction L-citrulline + L-aspartate + ATP = 2-(N(omega)-L-arginino)succinate + AMP + diphosphate + H(+). The protein operates within amino-acid biosynthesis; L-arginine biosynthesis; L-arginine from L-ornithine and carbamoyl phosphate: step 2/3. In Synechococcus sp. (strain JA-3-3Ab) (Cyanobacteria bacterium Yellowstone A-Prime), this protein is Argininosuccinate synthase.